The sequence spans 92 residues: Putative phosphotransferase enzyme IIB component SgcB (92 aa).

One can recognise a PTS EIIB type-2 domain in the interval 1–92 (MKKILVACGT…KQQIKALLTQ (92 aa)). Residue Cys-8 is the Phosphocysteine intermediate of the active site.

Its subcellular location is the cytoplasm. In terms of biological role, the phosphoenolpyruvate-dependent sugar phosphotransferase system (sugar PTS), a major carbohydrate active -transport system, catalyzes the phosphorylation of incoming sugar substrates concomitantly with their translocation across the cell membrane. The sequence is that of Putative phosphotransferase enzyme IIB component SgcB (sgcB) from Escherichia coli (strain K12).